Consider the following 124-residue polypeptide: Large ribosomal subunit protein bL12 (124 aa).

This sequence belongs to the bacterial ribosomal protein bL12 family. As to quaternary structure, homodimer. Part of the ribosomal stalk of the 50S ribosomal subunit. Forms a multimeric L10(L12)X complex, where L10 forms an elongated spine to which 2 to 4 L12 dimers bind in a sequential fashion. Binds GTP-bound translation factors.

In terms of biological role, forms part of the ribosomal stalk which helps the ribosome interact with GTP-bound translation factors. Is thus essential for accurate translation. In Phocaeicola vulgatus (strain ATCC 8482 / DSM 1447 / JCM 5826 / CCUG 4940 / NBRC 14291 / NCTC 11154) (Bacteroides vulgatus), this protein is Large ribosomal subunit protein bL12.